We begin with the raw amino-acid sequence, 358 residues long: Phenylalanine--tRNA ligase alpha subunit (358 aa).

A Mg(2+)-binding site is contributed by glutamate 262.

The protein belongs to the class-II aminoacyl-tRNA synthetase family. Phe-tRNA synthetase alpha subunit type 1 subfamily. As to quaternary structure, tetramer of two alpha and two beta subunits. Requires Mg(2+) as cofactor.

The protein resides in the cytoplasm. The catalysed reaction is tRNA(Phe) + L-phenylalanine + ATP = L-phenylalanyl-tRNA(Phe) + AMP + diphosphate + H(+). The polypeptide is Phenylalanine--tRNA ligase alpha subunit (pheS) (Streptomyces coelicolor (strain ATCC BAA-471 / A3(2) / M145)).